The following is a 274-amino-acid chain: Oxidized low-density lipoprotein receptor 1 (274 aa).

The interval 1 to 28 (MTLDDLKSNSMKDQPDEKSNGDKAEGPR) is disordered. The Cytoplasmic portion of the chain corresponds to 1–37 (MTLDDLKSNSMKDQPDEKSNGDKAEGPRSLSTLRWRP). The segment covering 13–26 (DQPDEKSNGDKAEG) has biased composition (basic and acidic residues). The chain crosses the membrane as a helical; Signal-anchor for type II membrane protein span at residues 38 to 60 (AALILGLLCLGLLVTVILLIIQL). Residue cysteine 46 is the site of S-palmitoyl cysteine attachment. The neck stretch occupies residues 61 to 150 (SQVSDLLKQQ…SGPCPQDWLW (90 aa)). At 61 to 274 (SQVSDLLKQQ…QKRANLLRAQ (214 aa)) the chain is on the extracellular side. Residues 89–142 (RQAEKSSQESQRELTEMIETLAHKLDEKSKKLMELQQQNLNLQKALEKAANFSG) adopt a coiled-coil conformation. N-linked (GlcNAc...) asparagine glycosylation occurs at asparagine 139. 3 disulfide bridges follow: cysteine 144–cysteine 155, cysteine 172–cysteine 264, and cysteine 243–cysteine 256. Residues 151-265 (HEENCYKFSS…CILNAFSICQ (115 aa)) enclose the C-type lectin domain.

Homodimer; disulfide-linked. May form a hexamer composed of 3 homodimers. Interacts with HSP70. In terms of processing, N-glycosylated.

It localises to the cell membrane. It is found in the membrane raft. The protein resides in the secreted. Its function is as follows. Receptor that mediates the recognition, internalization and degradation of oxidatively modified low density lipoprotein (oxLDL) by vascular endothelial cells. OxLDL is a marker of atherosclerosis that induces vascular endothelial cell activation and dysfunction, resulting in pro-inflammatory responses, pro-oxidative conditions and apoptosis. Its association with oxLDL induces the activation of NF-kappa-B through an increased production of intracellular reactive oxygen and a variety of pro-atherogenic cellular responses including a reduction of nitric oxide (NO) release, monocyte adhesion and apoptosis. In addition to binding oxLDL, it acts as a receptor for the HSP70 protein involved in antigen cross-presentation to naive T-cells in dendritic cells, thereby participating in cell-mediated antigen cross-presentation. Also involved in inflammatory process, by acting as a leukocyte-adhesion molecule at the vascular interface in endotoxin-induced inflammation. Also acts as a receptor for advanced glycation end (AGE) products, activated platelets, monocytes, apoptotic cells and both Gram-negative and Gram-positive bacteria. This chain is Oxidized low-density lipoprotein receptor 1 (OLR1), found in Sus scrofa (Pig).